A 199-amino-acid chain; its full sequence is uncharacterized protein (199 aa).

It to M.jannaschii MJ1356.

This is an uncharacterized protein from Methanocaldococcus jannaschii (strain ATCC 43067 / DSM 2661 / JAL-1 / JCM 10045 / NBRC 100440) (Methanococcus jannaschii).